The following is a 288-amino-acid chain: Quinate/shikimate dehydrogenase (288 aa).

Residues lysine 71 and aspartate 107 each coordinate substrate. NAD(+) is bound by residues 132 to 135, 155 to 158, lysine 205, 232 to 235, and glycine 255; these read AGGA, NRKD, and CVYN.

The protein belongs to the shikimate dehydrogenase family. In terms of assembly, homodimer.

It carries out the reaction L-quinate + NAD(+) = 3-dehydroquinate + NADH + H(+). The enzyme catalyses L-quinate + NADP(+) = 3-dehydroquinate + NADPH + H(+). It catalyses the reaction shikimate + NADP(+) = 3-dehydroshikimate + NADPH + H(+). The catalysed reaction is shikimate + NAD(+) = 3-dehydroshikimate + NADH + H(+). The protein operates within metabolic intermediate biosynthesis; chorismate biosynthesis; chorismate from D-erythrose 4-phosphate and phosphoenolpyruvate: step 4/7. In terms of biological role, the actual biological function of YdiB remains unclear, nor is it known whether 3-dehydroshikimate or quinate represents the natural substrate. Catalyzes the reversible NAD-dependent reduction of both 3-dehydroshikimate (DHSA) and 3-dehydroquinate to yield shikimate (SA) and quinate, respectively. It can use both NAD or NADP for catalysis, however it has higher catalytic efficiency with NAD. In Salmonella agona (strain SL483), this protein is Quinate/shikimate dehydrogenase.